The sequence spans 376 residues: Lipid-A-disaccharide synthase (376 aa).

This sequence belongs to the LpxB family.

The catalysed reaction is a lipid X + a UDP-2-N,3-O-bis[(3R)-3-hydroxyacyl]-alpha-D-glucosamine = a lipid A disaccharide + UDP + H(+). It participates in bacterial outer membrane biogenesis; LPS lipid A biosynthesis. In terms of biological role, condensation of UDP-2,3-diacylglucosamine and 2,3-diacylglucosamine-1-phosphate to form lipid A disaccharide, a precursor of lipid A, a phosphorylated glycolipid that anchors the lipopolysaccharide to the outer membrane of the cell. The protein is Lipid-A-disaccharide synthase of Hydrogenovibrio crunogenus (strain DSM 25203 / XCL-2) (Thiomicrospira crunogena).